A 129-amino-acid polypeptide reads, in one-letter code: Ig kappa chain V-IV region S107B (129 aa).

The N-terminal stretch at 1–22 is a signal peptide; sequence MDLQVQIIXFLLISVTVIMSRG. A framework-1 region spans residues 23–45; it reads ENVLTQSPAIMAASLGQKVTMTC. Residues cysteine 45 and cysteine 111 are joined by a disulfide bond. Positions 46 to 57 are complementarity-determining-1; the sequence is SASSSVSSSYLH. The tract at residues 58 to 72 is framework-2; it reads WYQQKSGASPKPLIH. The complementarity-determining-2 stretch occupies residues 73–79; the sequence is RTSNLAS. Residues 80–111 are framework-3; it reads GVPARFSGSGSGTSYSLTISSVEAEDDATYYC. A complementarity-determining-3 region spans residues 112 to 118; it reads QQWSGYP. Positions 119–128 are framework-4; sequence FGSGTKLEIK.

This chain is Ig kappa chain V-IV region S107B, found in Mus musculus (Mouse).